The sequence spans 231 residues: Small ribosomal subunit protein uS2c (231 aa).

The protein belongs to the universal ribosomal protein uS2 family.

The protein resides in the plastid. Its subcellular location is the chloroplast. This is Small ribosomal subunit protein uS2c (rps2) from Gracilaria tenuistipitata var. liui (Red alga).